The following is a 103-amino-acid chain: Phosphoribosyl-ATP pyrophosphatase (103 aa).

The protein belongs to the PRA-PH family.

It is found in the cytoplasm. It carries out the reaction 1-(5-phospho-beta-D-ribosyl)-ATP + H2O = 1-(5-phospho-beta-D-ribosyl)-5'-AMP + diphosphate + H(+). Its pathway is amino-acid biosynthesis; L-histidine biosynthesis; L-histidine from 5-phospho-alpha-D-ribose 1-diphosphate: step 2/9. In Cereibacter sphaeroides (strain KD131 / KCTC 12085) (Rhodobacter sphaeroides), this protein is Phosphoribosyl-ATP pyrophosphatase.